We begin with the raw amino-acid sequence, 160 residues long: MKRFILLAIATVFFFCQFQTNPVNALELDEATRTVALDETGKTTIVTSKQITNGQRLFVQECTQCHLQGKTKTNNNVSLGLDDLAGAEPPRNNVLALVDYLKHPTSYDGEDNYEELHVNVTRPDLFPELRNFTEDDLYDVAGYVLVAPKLDAYWGGSIYF.

Positions 1–25 are cleaved as a signal peptide; it reads MKRFILLAIATVFFFCQFQTNPVNA. Heme c contacts are provided by Cys-62, Cys-65, His-66, and His-117.

This sequence belongs to the cytochrome c family. PsbV subfamily. As to quaternary structure, PSII is composed of 1 copy each of membrane proteins PsbA, PsbB, PsbC, PsbD, PsbE, PsbF, PsbH, PsbI, PsbJ, PsbK, PsbL, PsbM, PsbT, PsbX, PsbY, PsbZ, Psb30/Ycf12, peripheral proteins PsbO, CyanoQ (PsbQ), PsbU, PsbV and a large number of cofactors. It forms dimeric complexes. It depends on heme c as a cofactor.

The protein localises to the cellular thylakoid membrane. One of the extrinsic, lumenal subunits of photosystem II (PSII). PSII is a light-driven water plastoquinone oxidoreductase, using light energy to abstract electrons from H(2)O, generating a proton gradient subsequently used for ATP formation. The extrinsic proteins stabilize the structure of photosystem II oxygen-evolving complex (OEC), the ion environment of oxygen evolution and protect the OEC against heat-induced inactivation. Low-potential cytochrome c that plays a role in the OEC of PSII. This Rippkaea orientalis (strain PCC 8801 / RF-1) (Cyanothece sp. (strain PCC 8801)) protein is Photosystem II extrinsic protein V.